The chain runs to 587 residues: Arginine--tRNA ligase (587 aa).

The 'HIGH' region motif lies at 127–137 (PNLAKEMHVGH).

Belongs to the class-I aminoacyl-tRNA synthetase family. In terms of assembly, monomer.

It localises to the cytoplasm. It catalyses the reaction tRNA(Arg) + L-arginine + ATP = L-arginyl-tRNA(Arg) + AMP + diphosphate. The sequence is that of Arginine--tRNA ligase from Pseudomonas aeruginosa (strain LESB58).